The primary structure comprises 226 residues: V-type proton ATPase subunit E (226 aa).

Belongs to the V-ATPase E subunit family. V-ATPase is a heteromultimeric enzyme composed of a peripheral catalytic V1 complex (components A to H) attached to an integral membrane V0 proton pore complex (components: a, c, c', c'' and d).

Functionally, subunit of the peripheral V1 complex of vacuolar ATPase essential for assembly or catalytic function. V-ATPase is responsible for acidifying a variety of intracellular compartments in eukaryotic cells. The chain is V-type proton ATPase subunit E (VATE) from Mesembryanthemum crystallinum (Common ice plant).